The chain runs to 458 residues: Phosphoglucosamine mutase (458 aa).

The active-site Phosphoserine intermediate is the Ser106. Residues Ser106, Asp247, Asp249, and Asp251 each contribute to the Mg(2+) site. Position 106 is a phosphoserine (Ser106).

It belongs to the phosphohexose mutase family. The cofactor is Mg(2+). Post-translationally, activated by phosphorylation.

It carries out the reaction alpha-D-glucosamine 1-phosphate = D-glucosamine 6-phosphate. Catalyzes the conversion of glucosamine-6-phosphate to glucosamine-1-phosphate. The sequence is that of Phosphoglucosamine mutase from Chlamydia trachomatis serovar A (strain ATCC VR-571B / DSM 19440 / HAR-13).